The chain runs to 338 residues: MAGVNLQLRHAYSIAQFVPTVSSPPPLPTQRVRLGTSPSRVLLCNLRANSAAAPILRTTRRSVIVSASSVSSAVDSDSLVEDRDDVGRIPLLEVRDLRAVIAESRQEILKGVNLVVYEGEVHAVMGKNGSGKSTFSKVLVGHPDYEVTGGSIVFKGQNLLDMEPEDRSLAGLFMSFQSPVEIPGVSNMDFLNMAFNARKRKLGQPELDPIQFYSHLVSKLEVVNMKTDFLNRNVNEGFSGGERKRNEILQLAVLGAELAILDEIDSGLDVDALQDVAKAVNGLLTPKNSVLMITHYQRLLDYIKPTLIHIMENGRIIKTGDNSLAKLLEKEGYKAISG.

Residues 1–66 (MAGVNLQLRH…RTTRRSVIVS (66 aa)) constitute a chloroplast transit peptide. Residues 92–338 (LEVRDLRAVI…EKEGYKAISG (247 aa)) enclose the ABC transporter domain. An ATP-binding site is contributed by 126–133 (GKNGSGKS).

It belongs to the ABC transporter superfamily. ABCI family. In terms of assembly, interacts with NAP6. Present in all organs, with higher levels in aerial parts.

Its subcellular location is the plastid. It is found in the chloroplast. Functionally, essential protein. Required during embryo development, especially at early stages. Involved in chloroplast differentiation. The polypeptide is ABC transporter I family member 6, chloroplastic (ABCI6) (Arabidopsis thaliana (Mouse-ear cress)).